Consider the following 58-residue polypeptide: Leucine zipper protein 6 (58 aa).

As to expression, widely expressed, highest levels found in brain, placenta, spleen, testis, and ovary. Up-regulated in some tumor cells.

In Homo sapiens (Human), this protein is Leucine zipper protein 6 (LUZP6).